Reading from the N-terminus, the 544-residue chain is D-2-hydroxyglutarate dehydrogenase, mitochondrial (544 aa).

The transit peptide at 1–10 directs the protein to the mitochondrion; it reads MMMPRLVPRW. Residues 119-298 enclose the FAD-binding PCMH-type domain; sequence VRGSSKVLLR…TAVSILCPPK (180 aa). K124 bears the N6-succinyllysine mark. Residues R409, T413, and K424 each contribute to the (R)-2-hydroxyglutarate site. A (R)-lactate-binding site is contributed by R409. (R)-malate is bound by residues R409, T413, and K424. Zn(2+) contacts are provided by H457 and H464. N466 contributes to the (R)-2-hydroxyglutarate binding site. E498 contributes to the Zn(2+) binding site. A (R)-2-hydroxyglutarate-binding site is contributed by H499. H499 contacts (R)-lactate. H499 contributes to the (R)-malate binding site.

The protein belongs to the FAD-binding oxidoreductase/transferase type 4 family. FAD serves as cofactor.

It is found in the mitochondrion. The catalysed reaction is (R)-2-hydroxyglutarate + A = 2-oxoglutarate + AH2. It carries out the reaction (R)-malate + A = oxaloacetate + AH2. With respect to regulation, activated by zinc and cobalt ions. Functionally, catalyzes the oxidation of D-2-hydroxyglutarate (D-2-HG) to alpha-ketoglutarate. Also catalyzes the oxidation of other D-2-hydroxyacids, such as D-malate (D-MAL) and D-lactate (D-LAC). Exhibits high activities towards D-2-HG and D-MAL but a very weak activity towards D-LAC. In Bos taurus (Bovine), this protein is D-2-hydroxyglutarate dehydrogenase, mitochondrial (D2HGDH).